Consider the following 119-residue polypeptide: U-scoloptoxin(16)-Er11a (119 aa).

The N-terminal stretch at 1-19 (MKSWTAAVLSLGLIYLSIS) is a signal peptide.

Belongs to the scoloptoxin-16 family. Post-translationally, contains 4 disulfide bonds. Expressed by the venom gland.

The protein resides in the secreted. This Ethmostigmus rubripes (Giant centipede) protein is U-scoloptoxin(16)-Er11a.